The primary structure comprises 519 residues: Ribonuclease Y (519 aa).

A helical membrane pass occupies residues leucine 3–valine 23. Residues threonine 209 to leucine 269 form the KH domain. The 94-residue stretch at valine 335–alanine 428 folds into the HD domain.

This sequence belongs to the RNase Y family.

Its subcellular location is the cell membrane. Endoribonuclease that initiates mRNA decay. The polypeptide is Ribonuclease Y (Staphylococcus epidermidis (strain ATCC 35984 / DSM 28319 / BCRC 17069 / CCUG 31568 / BM 3577 / RP62A)).